We begin with the raw amino-acid sequence, 559 residues long: NXPE family member 2 (559 aa).

Residues 17–37 (AIARKLLLMLTFILIFWIIYL) form a helical membrane-spanning segment.

It belongs to the NXPE family.

Its subcellular location is the membrane. The polypeptide is NXPE family member 2 (NXPE2) (Homo sapiens (Human)).